The sequence spans 250 residues: Ribosomal RNA small subunit methyltransferase J (250 aa).

S-adenosyl-L-methionine is bound by residues 101–102 (RD), 117–118 (ER), 153–154 (SS), and Asp171.

It belongs to the methyltransferase superfamily. RsmJ family.

It localises to the cytoplasm. It catalyses the reaction guanosine(1516) in 16S rRNA + S-adenosyl-L-methionine = N(2)-methylguanosine(1516) in 16S rRNA + S-adenosyl-L-homocysteine + H(+). In terms of biological role, specifically methylates the guanosine in position 1516 of 16S rRNA. The protein is Ribosomal RNA small subunit methyltransferase J of Escherichia fergusonii (strain ATCC 35469 / DSM 13698 / CCUG 18766 / IAM 14443 / JCM 21226 / LMG 7866 / NBRC 102419 / NCTC 12128 / CDC 0568-73).